The following is a 145-amino-acid chain: Hydrophobin-like protein 1 (145 aa).

The first 20 residues, Met-1 to Ala-20, serve as a signal peptide directing secretion. Asn-36 is a glycosylation site (N-linked (GlcNAc...) asparagine). Intrachain disulfides connect Cys-61–Cys-121, Cys-71–Cys-113, Cys-72–Cys-104, and Cys-122–Cys-139.

The protein resides in the secreted. It localises to the cell wall. Aerial growth, conidiation, and dispersal of filamentous fungi in the environment rely upon a capability of their secreting small amphipathic proteins called hydrophobins (HPBs) with low sequence identity. Class I can self-assemble into an outermost layer of rodlet bundles on aerial cell surfaces, conferring cellular hydrophobicity that supports fungal growth, development and dispersal; whereas Class II form highly ordered films at water-air interfaces through intermolecular interactions but contribute nothing to the rodlet structure. In Botryotinia fuckeliana, hydrophobins are not involved in conferring surface hydrophobicity to conidia and aerial hyphae and their function in sclerotia and fruiting bodies remains to be investigated. This Botryotinia fuckeliana (strain B05.10) (Noble rot fungus) protein is Hydrophobin-like protein 1.